The primary structure comprises 396 residues: tRNA(Met) cytidine acetate ligase (396 aa).

ATP is bound by residues 9–22 (IVEY…HLHH), Gly103, Asn154, and Arg179.

This sequence belongs to the TmcAL family.

The protein resides in the cytoplasm. It catalyses the reaction cytidine(34) in elongator tRNA(Met) + acetate + ATP = N(4)-acetylcytidine(34) in elongator tRNA(Met) + AMP + diphosphate. Catalyzes the formation of N(4)-acetylcytidine (ac(4)C) at the wobble position of elongator tRNA(Met), using acetate and ATP as substrates. First activates an acetate ion to form acetyladenylate (Ac-AMP) and then transfers the acetyl group to tRNA to form ac(4)C34. This chain is tRNA(Met) cytidine acetate ligase, found in Fusobacterium nucleatum subsp. nucleatum (strain ATCC 25586 / DSM 15643 / BCRC 10681 / CIP 101130 / JCM 8532 / KCTC 2640 / LMG 13131 / VPI 4355).